A 201-amino-acid polypeptide reads, in one-letter code: Retinol-binding protein 4 (201 aa).

A signal peptide spans 1-18 (MEWVWALVLLAALGGGSA). Cystine bridges form between C22–C178, C88–C192, and C138–C147. A substrate-binding site is contributed by Q116. R139 carries the post-translational modification Omega-N-methylarginine.

This sequence belongs to the calycin superfamily. Lipocalin family. As to quaternary structure, interacts with TTR. Interaction with TTR prevents its loss by filtration through the kidney glomeruli. Interacts with STRA6.

It is found in the secreted. Retinol-binding protein that mediates retinol transport in blood plasma. Delivers retinol from the liver stores to the peripheral tissues. Transfers the bound all-trans retinol to STRA6, that then facilitates retinol transport across the cell membrane. The sequence is that of Retinol-binding protein 4 (Rbp4) from Mus musculus (Mouse).